The primary structure comprises 144 residues: UPF0102 protein sce2912 (144 aa).

It belongs to the UPF0102 family.

The polypeptide is UPF0102 protein sce2912 (Sorangium cellulosum (strain So ce56) (Polyangium cellulosum (strain So ce56))).